Here is a 426-residue protein sequence, read N- to C-terminus: G2/mitotic-specific cyclin-A (426 aa).

The segment covering 1–11 (MSMVHGSSFQI) has biased composition (polar residues). The disordered stretch occupies residues 1–22 (MSMVHGSSFQIAQDGENENQGV).

It belongs to the cyclin family. Cyclin AB subfamily.

Essential for the control of the cell cycle at the G2/M (mitosis) transition. Interacts with the CDC2 and CDK2 protein kinases to form MPF. G2/M cyclins accumulate steadily during G2 and are abruptly destroyed at mitosis. This is G2/mitotic-specific cyclin-A from Patella vulgata (Common limpet).